Here is a 461-residue protein sequence, read N- to C-terminus: Putative cytochrome P450 132 (461 aa).

C409 serves as a coordination point for heme.

It belongs to the cytochrome P450 family. Requires heme as cofactor.

The protein is Putative cytochrome P450 132 (cyp132) of Mycobacterium bovis (strain ATCC BAA-935 / AF2122/97).